The chain runs to 622 residues: 3-(3-hydroxy-phenyl)propionate/3-hydroxycinnamic acid hydroxylase (622 aa).

FAD-binding positions include Asp-20 to Lys-49 and Phe-288 to Asp-298.

The protein belongs to the PheA/TfdB FAD monooxygenase family. The cofactor is FAD.

The catalysed reaction is 3-(3-hydroxyphenyl)propanoate + NADH + O2 + H(+) = 3-(2,3-dihydroxyphenyl)propanoate + NAD(+) + H2O. It carries out the reaction (2E)-3-(3-hydroxyphenyl)prop-2-enoate + NADH + O2 + H(+) = (2E)-3-(2,3-dihydroxyphenyl)prop-2-enoate + NAD(+) + H2O. It functions in the pathway aromatic compound metabolism; 3-phenylpropanoate degradation. In terms of biological role, catalyzes the insertion of one atom of molecular oxygen into position 2 of the phenyl ring of 3-(3-hydroxyphenyl)propionate (3-HPP) and hydroxycinnamic acid (3HCI). This chain is 3-(3-hydroxy-phenyl)propionate/3-hydroxycinnamic acid hydroxylase, found in Paraburkholderia xenovorans (strain LB400).